Consider the following 207-residue polypeptide: Ribosome maturation factor RimM (207 aa).

The PRC barrel domain occupies 114-207; the sequence is DDEYYWVDLI…RIDSDWPLDY (94 aa).

Belongs to the RimM family. As to quaternary structure, binds ribosomal protein uS19.

Its subcellular location is the cytoplasm. In terms of biological role, an accessory protein needed during the final step in the assembly of 30S ribosomal subunit, possibly for assembly of the head region. Essential for efficient processing of 16S rRNA. May be needed both before and after RbfA during the maturation of 16S rRNA. It has affinity for free ribosomal 30S subunits but not for 70S ribosomes. The chain is Ribosome maturation factor RimM from Bordetella bronchiseptica (strain ATCC BAA-588 / NCTC 13252 / RB50) (Alcaligenes bronchisepticus).